The chain runs to 521 residues: Glucose-6-phosphate isomerase (521 aa).

E327 serves as the catalytic Proton donor. Residues H358 and K486 contribute to the active site.

It belongs to the GPI family.

Its subcellular location is the cytoplasm. It carries out the reaction alpha-D-glucose 6-phosphate = beta-D-fructose 6-phosphate. The protein operates within carbohydrate biosynthesis; gluconeogenesis. It participates in carbohydrate degradation; glycolysis; D-glyceraldehyde 3-phosphate and glycerone phosphate from D-glucose: step 2/4. Functionally, catalyzes the reversible isomerization of glucose-6-phosphate to fructose-6-phosphate. The sequence is that of Glucose-6-phosphate isomerase from Bordetella bronchiseptica (strain ATCC BAA-588 / NCTC 13252 / RB50) (Alcaligenes bronchisepticus).